The sequence spans 245 residues: MASLGVNIDHIANVREARKTFEPDPVKMVLLAELGGADGITVHLREDRRHIQDRDLNLLKETVHTRLNLEMAATEEMTSIALNLKPDIVTLVPEKREEVTTEGGLDVIKNKRKLKEIIQRLSGEDIPVSLFVDPVQAQLENCAEVKAAWVELHTGKYAITKKKARDLELSILKESTAKAKSYGLRVNAGHGLTYQNVEPIAAIEGIEELNIGHTIISRALSVGLSQAVKEMKSLIINPRKDNFLL.

Position 7 (Asn7) interacts with 3-amino-2-oxopropyl phosphate. 9 to 10 (DH) provides a ligand contact to 1-deoxy-D-xylulose 5-phosphate. Arg18 contacts 3-amino-2-oxopropyl phosphate. The active-site Proton acceptor is His43. Positions 45 and 50 each coordinate 1-deoxy-D-xylulose 5-phosphate. Catalysis depends on Glu70, which acts as the Proton acceptor. Thr100 provides a ligand contact to 1-deoxy-D-xylulose 5-phosphate. His190 serves as the catalytic Proton donor. 3-amino-2-oxopropyl phosphate-binding positions include Gly191 and 212–213 (GH).

This sequence belongs to the PNP synthase family. As to quaternary structure, homooctamer; tetramer of dimers.

It localises to the cytoplasm. The catalysed reaction is 3-amino-2-oxopropyl phosphate + 1-deoxy-D-xylulose 5-phosphate = pyridoxine 5'-phosphate + phosphate + 2 H2O + H(+). Its pathway is cofactor biosynthesis; pyridoxine 5'-phosphate biosynthesis; pyridoxine 5'-phosphate from D-erythrose 4-phosphate: step 5/5. Its function is as follows. Catalyzes the complicated ring closure reaction between the two acyclic compounds 1-deoxy-D-xylulose-5-phosphate (DXP) and 3-amino-2-oxopropyl phosphate (1-amino-acetone-3-phosphate or AAP) to form pyridoxine 5'-phosphate (PNP) and inorganic phosphate. The polypeptide is Pyridoxine 5'-phosphate synthase (Prochlorococcus marinus (strain NATL2A)).